The primary structure comprises 556 residues: Glucose-6-phosphate isomerase (556 aa).

Glu-360 acts as the Proton donor in catalysis. Catalysis depends on residues His-391 and Lys-519.

It belongs to the GPI family.

It is found in the cytoplasm. It catalyses the reaction alpha-D-glucose 6-phosphate = beta-D-fructose 6-phosphate. Its pathway is carbohydrate biosynthesis; gluconeogenesis. It participates in carbohydrate degradation; glycolysis; D-glyceraldehyde 3-phosphate and glycerone phosphate from D-glucose: step 2/4. Catalyzes the reversible isomerization of glucose-6-phosphate to fructose-6-phosphate. The polypeptide is Glucose-6-phosphate isomerase (Acinetobacter baumannii (strain ATCC 17978 / DSM 105126 / CIP 53.77 / LMG 1025 / NCDC KC755 / 5377)).